A 173-amino-acid polypeptide reads, in one-letter code: Small ribosomal subunit protein uS5 (173 aa).

The S5 DRBM domain occupies 17–80; sequence WQERVIQIRR…ADGKKQLIEV (64 aa).

It belongs to the universal ribosomal protein uS5 family. Part of the 30S ribosomal subunit. Contacts proteins S4 and S8.

Functionally, with S4 and S12 plays an important role in translational accuracy. Its function is as follows. Located at the back of the 30S subunit body where it stabilizes the conformation of the head with respect to the body. This Synechocystis sp. (strain ATCC 27184 / PCC 6803 / Kazusa) protein is Small ribosomal subunit protein uS5.